Here is a 237-residue protein sequence, read N- to C-terminus: LexA repressor (237 aa).

Residues Phe-26–Thr-46 constitute a DNA-binding region (H-T-H motif). Catalysis depends on for autocatalytic cleavage activity residues Ser-158 and Lys-196.

Belongs to the peptidase S24 family. As to quaternary structure, homodimer.

It carries out the reaction Hydrolysis of Ala-|-Gly bond in repressor LexA.. Its function is as follows. Represses a number of genes involved in the response to DNA damage (SOS response), including recA and lexA. In the presence of single-stranded DNA, RecA interacts with LexA causing an autocatalytic cleavage which disrupts the DNA-binding part of LexA, leading to derepression of the SOS regulon and eventually DNA repair. The sequence is that of LexA repressor from Bartonella quintana (strain Toulouse) (Rochalimaea quintana).